The primary structure comprises 878 residues: Phosphoenolpyruvate carboxylase (878 aa).

Active-site residues include histidine 138 and lysine 545.

It belongs to the PEPCase type 1 family. The cofactor is Mg(2+).

The catalysed reaction is oxaloacetate + phosphate = phosphoenolpyruvate + hydrogencarbonate. Functionally, forms oxaloacetate, a four-carbon dicarboxylic acid source for the tricarboxylic acid cycle. The chain is Phosphoenolpyruvate carboxylase from Shewanella loihica (strain ATCC BAA-1088 / PV-4).